We begin with the raw amino-acid sequence, 346 residues long: Phosphoribosylformylglycinamidine cyclo-ligase (346 aa).

Belongs to the AIR synthase family.

It is found in the cytoplasm. It catalyses the reaction 2-formamido-N(1)-(5-O-phospho-beta-D-ribosyl)acetamidine + ATP = 5-amino-1-(5-phospho-beta-D-ribosyl)imidazole + ADP + phosphate + H(+). Its pathway is purine metabolism; IMP biosynthesis via de novo pathway; 5-amino-1-(5-phospho-D-ribosyl)imidazole from N(2)-formyl-N(1)-(5-phospho-D-ribosyl)glycinamide: step 2/2. This chain is Phosphoribosylformylglycinamidine cyclo-ligase, found in Bacillus thuringiensis subsp. konkukian (strain 97-27).